The following is a 798-amino-acid chain: Penicillin-binding protein 1A (798 aa).

Residues 2 to 9 (IKKILTTC) lie on the Cytoplasmic side of the membrane. The helical; Signal-anchor for type II membrane protein transmembrane segment at 10–30 (FGLFFGFCVFGVGLVAIAILV) threads the bilayer. Residues 31-798 (TYPKLPSLDS…SKQQQLDSLF (768 aa)) are Periplasmic-facing. Residues 50–218 (LTIYSADGEV…SAYNPIVNPE (169 aa)) are transglycosylase. The active-site Proton donor; for transglycosylase activity is E88. The segment at 378–700 (RRALGFAARA…GTIAVPVWVD (323 aa)) is transpeptidase. S461 (acyl-ester intermediate; for transpeptidase activity) is an active-site residue. Residues 739–798 (LMLDNSGIAPQPSRRAKEDDEAAVENEQQGRSDETRQDVQETPVLPSNTDSKQQQLDSLF) are disordered. The segment covering 766–777 (QQGRSDETRQDV) has biased composition (basic and acidic residues). A compositionally biased stretch (polar residues) spans 783–798 (LPSNTDSKQQQLDSLF).

This sequence in the N-terminal section; belongs to the glycosyltransferase 51 family. The protein in the C-terminal section; belongs to the transpeptidase family.

Its subcellular location is the cell inner membrane. The enzyme catalyses [GlcNAc-(1-&gt;4)-Mur2Ac(oyl-L-Ala-gamma-D-Glu-L-Lys-D-Ala-D-Ala)](n)-di-trans,octa-cis-undecaprenyl diphosphate + beta-D-GlcNAc-(1-&gt;4)-Mur2Ac(oyl-L-Ala-gamma-D-Glu-L-Lys-D-Ala-D-Ala)-di-trans,octa-cis-undecaprenyl diphosphate = [GlcNAc-(1-&gt;4)-Mur2Ac(oyl-L-Ala-gamma-D-Glu-L-Lys-D-Ala-D-Ala)](n+1)-di-trans,octa-cis-undecaprenyl diphosphate + di-trans,octa-cis-undecaprenyl diphosphate + H(+). It carries out the reaction Preferential cleavage: (Ac)2-L-Lys-D-Ala-|-D-Ala. Also transpeptidation of peptidyl-alanyl moieties that are N-acyl substituents of D-alanine.. It functions in the pathway cell wall biogenesis; peptidoglycan biosynthesis. In terms of biological role, cell wall formation. Synthesis of cross-linked peptidoglycan from the lipid intermediates. The enzyme has a penicillin-insensitive transglycosylase N-terminal domain (formation of linear glycan strands) and a penicillin-sensitive transpeptidase C-terminal domain (cross-linking of the peptide subunits). Essential for cell wall synthesis. The polypeptide is Penicillin-binding protein 1A (mrcA) (Neisseria gonorrhoeae (strain ATCC 700825 / FA 1090)).